The following is a 331-amino-acid chain: Small ribosomal subunit protein uS2 (331 aa).

The protein belongs to the universal ribosomal protein uS2 family.

In Rhodopseudomonas palustris (strain HaA2), this protein is Small ribosomal subunit protein uS2.